The sequence spans 439 residues: 3-phosphoshikimate 1-carboxyvinyltransferase (439 aa).

3-phosphoshikimate is bound by residues Lys-21, Ser-22, and Arg-26. Lys-21 contacts phosphoenolpyruvate. Phosphoenolpyruvate-binding residues include Gly-94 and Arg-122. The 3-phosphoshikimate site is built by Ser-167, Gln-169, Asp-320, and Lys-347. Phosphoenolpyruvate is bound at residue Gln-169. The active-site Proton acceptor is the Asp-320. Positions 351 and 395 each coordinate phosphoenolpyruvate.

This sequence belongs to the EPSP synthase family. As to quaternary structure, monomer.

The protein localises to the cytoplasm. The catalysed reaction is 3-phosphoshikimate + phosphoenolpyruvate = 5-O-(1-carboxyvinyl)-3-phosphoshikimate + phosphate. Its pathway is metabolic intermediate biosynthesis; chorismate biosynthesis; chorismate from D-erythrose 4-phosphate and phosphoenolpyruvate: step 6/7. Its function is as follows. Catalyzes the transfer of the enolpyruvyl moiety of phosphoenolpyruvate (PEP) to the 5-hydroxyl of shikimate-3-phosphate (S3P) to produce enolpyruvyl shikimate-3-phosphate and inorganic phosphate. In Hyphomonas neptunium (strain ATCC 15444), this protein is 3-phosphoshikimate 1-carboxyvinyltransferase.